A 222-amino-acid polypeptide reads, in one-letter code: MERIEGVAVGRCAASPYLVPLTLHYRQNGAQKSWDFMKTHDSVTILMFNSSRRSLVLVKQFRPAVYAGEVERLFPGSLAAAEQDRPQALQAALPGSAGVTYELCAGLLDQPGLSLEEVACKEAWEECGYRLAPSDLRRVTSYKSGVGLTGSSQTMFYAEVTDAQRGSPGGGLAEEGELIEVVHLPLDGARTFADDPDVPKTLGVIFGISWFFSCVAPGLGLQ.

In terms of domain architecture, Nudix hydrolase spans 38–206 (KTHDSVTILM…DVPKTLGVIF (169 aa)). The Nudix box motif lies at 111–129 (PGLSLEEVACKEAWEECGY).

This sequence belongs to the Nudix hydrolase family. Homodimer. Mg(2+) serves as cofactor.

The protein resides in the cytoplasm. It carries out the reaction UDP-sugar + H2O = UMP + alpha-D-aldose 1-phosphate.. Hydrolyzes UDP-glucose to glucose 1-phosphate and UMP and ADP-ribose to ribose 5-phosphate and AMP. The physiological substrate is probably UDP-glucose. Poor activity on other substrates such as ADP-glucose, CDP-glucose, GDP-glucose and GDP-mannose. This is Uridine diphosphate glucose pyrophosphatase NUDT14 (NUDT14) from Bos taurus (Bovine).